Here is a 399-residue protein sequence, read N- to C-terminus: Elongation factor Tu (399 aa).

The 200-residue stretch at 10 to 209 (NPHVNIGTIG…EVDSYIPTPE (200 aa)) folds into the tr-type G domain. Residues 19–26 (GHVYHGKT) are G1. 19–26 (GHVYHGKT) contacts GTP. Thr26 is a binding site for Mg(2+). Residues 60 to 64 (GITIA) are G2. A G3 region spans residues 81–84 (DCPG). GTP is bound by residues 81-85 (DCPGH) and 136-139 (NKQD). The tract at residues 136–139 (NKQD) is G4. Residues 174 to 176 (SAL) are G5.

This sequence belongs to the TRAFAC class translation factor GTPase superfamily. Classic translation factor GTPase family. EF-Tu/EF-1A subfamily. Monomer.

The protein localises to the cytoplasm. It carries out the reaction GTP + H2O = GDP + phosphate + H(+). In terms of biological role, GTP hydrolase that promotes the GTP-dependent binding of aminoacyl-tRNA to the A-site of ribosomes during protein biosynthesis. The polypeptide is Elongation factor Tu (Helicobacter pylori (strain J99 / ATCC 700824) (Campylobacter pylori J99)).